Reading from the N-terminus, the 376-residue chain is Proteasome-interacting protein CIC1 (376 aa).

Disordered stretches follow at residues 1–29 and 356–376; these read MAKK…KKSS and RSSS…KAKS. The interval 310 to 376 is required for interaction with CDC4; that stretch reads ETHEDDMVTI…ESEAVKKAKS (67 aa). Over residues 357–376 the composition is skewed to basic and acidic residues; that stretch reads SSSELEKESSESEAVKKAKS.

In terms of assembly, interacts with CDC4, PRE4, PRE6, RPT1 and SCL1 as part of the fully assembled 26S proteasome. Interacts with pre-ribosomal particles constituent NOP7.

The protein resides in the nucleus. Its subcellular location is the nucleolus. In terms of biological role, an adapter protein that specifically links the 26S proteasome to its substrate CDC4 which is one of the substrate recognition subunits of the SCF E3 ubiquitin ligase complex. Required for turnover of cell cycle regulatory proteins CDC4 and GRR1. Required for synthesis and nuclear export of 60S ribosomal subunits. Required for vegetative growth. The chain is Proteasome-interacting protein CIC1 (CIC1) from Saccharomyces cerevisiae (strain ATCC 204508 / S288c) (Baker's yeast).